The chain runs to 535 residues: CTP synthase (535 aa).

An amidoligase domain region spans residues 1 to 268 (MSTKYIFVTG…DQIVCDHLKL (268 aa)). Ser-14 serves as a coordination point for CTP. Ser-14 is a binding site for UTP. 15 to 20 (SMGKGI) is a binding site for ATP. Residue Tyr-55 coordinates L-glutamine. Residue Asp-72 participates in ATP binding. Mg(2+) is bound by residues Asp-72 and Glu-142. CTP is bound by residues 149 to 151 (DME), 189 to 194 (KTKIAQ), and Lys-225. Residues 189–194 (KTKIAQ) and Lys-225 contribute to the UTP site. Position 243 (Val-243) interacts with ATP. Residues 293–535 (KIALVGKYVE…FIRVAVENSK (243 aa)) form the Glutamine amidotransferase type-1 domain. Gly-355 is a binding site for L-glutamine. Cys-382 serves as the catalytic Nucleophile; for glutamine hydrolysis. L-glutamine contacts are provided by residues 383–386 (LGMQ), Glu-406, and Arg-464. Residues His-509 and Glu-511 contribute to the active site.

It belongs to the CTP synthase family. As to quaternary structure, homotetramer. In contrast to E.coli CTP synthase, remains a tetramer at dilute enzyme concentrations even in the absence of Mg(2+), ATP and UTP.

The enzyme catalyses UTP + L-glutamine + ATP + H2O = CTP + L-glutamate + ADP + phosphate + 2 H(+). The catalysed reaction is L-glutamine + H2O = L-glutamate + NH4(+). It catalyses the reaction UTP + NH4(+) + ATP = CTP + ADP + phosphate + 2 H(+). It participates in pyrimidine metabolism; CTP biosynthesis via de novo pathway; CTP from UDP: step 2/2. Allosterically activated by GTP, when glutamine is the substrate. GTP has no effect on the reaction when ammonia is the substrate. The allosteric effector GTP functions by stabilizing the protein conformation that binds the tetrahedral intermediate(s) formed during glutamine hydrolysis. Also activated by magnesium. Allosterically inhibited by CTP. Its function is as follows. Catalyzes the ATP-dependent amination of UTP to CTP with either L-glutamine or ammonia as the source of nitrogen. Is essential for the synthesis of CTP de novo. Contrary to other bacterial CTP synthases, the lactococcal enzyme is also able to convert dUTP to dCTP, but this reaction may not play a significant physiological role. Regulates intracellular CTP levels through interactions with the four ribonucleotide triphosphates. This is CTP synthase from Lactococcus lactis subsp. cremoris (strain MG1363).